Reading from the N-terminus, the 238-residue chain is 3-dehydroquinate dehydratase (238 aa).

3-dehydroquinate contacts are provided by residues 35–37 (ELR) and R70. Residue H133 is the Proton donor/acceptor of the active site. K160 serves as the catalytic Schiff-base intermediate with substrate. Positions 202 and 225 each coordinate 3-dehydroquinate.

The protein belongs to the type-I 3-dehydroquinase family. Homodimer.

It carries out the reaction 3-dehydroquinate = 3-dehydroshikimate + H2O. It functions in the pathway metabolic intermediate biosynthesis; chorismate biosynthesis; chorismate from D-erythrose 4-phosphate and phosphoenolpyruvate: step 3/7. In terms of biological role, involved in the third step of the chorismate pathway, which leads to the biosynthesis of aromatic amino acids. Catalyzes the cis-dehydration of 3-dehydroquinate (DHQ) and introduces the first double bond of the aromatic ring to yield 3-dehydroshikimate. In Staphylococcus aureus (strain MSSA476), this protein is 3-dehydroquinate dehydratase.